The sequence spans 298 residues: Ribosomal protein L11 methyltransferase (298 aa).

S-adenosyl-L-methionine contacts are provided by threonine 152, glycine 173, aspartate 195, and asparagine 234.

This sequence belongs to the methyltransferase superfamily. PrmA family.

The protein resides in the cytoplasm. The catalysed reaction is L-lysyl-[protein] + 3 S-adenosyl-L-methionine = N(6),N(6),N(6)-trimethyl-L-lysyl-[protein] + 3 S-adenosyl-L-homocysteine + 3 H(+). Its function is as follows. Methylates ribosomal protein L11. This Ralstonia pickettii (strain 12J) protein is Ribosomal protein L11 methyltransferase.